We begin with the raw amino-acid sequence, 239 residues long: Protein canopy homolog 4 (239 aa).

The signal sequence occupies residues 1–20 (MGPVRLGTLLFILTVYGAWA). 3 disulfides stabilise this stretch: Cys37-Cys195, Cys40-Cys183, and Cys93-Cys155. A disordered region spans residues 199–239 (TWTGKEKITDGQEKTEEEEQDQEEEEMTNTPVHSQHDPEDL). The span at 201-212 (TGKEKITDGQEK) shows a compositional bias: basic and acidic residues. Over residues 213-225 (TEEEEQDQEEEEM) the composition is skewed to acidic residues.

This sequence belongs to the canopy family. As to quaternary structure, interacts with TLR4.

It localises to the secreted. Its function is as follows. Plays a role in the regulation of the cell surface expression of TLR4. This chain is Protein canopy homolog 4 (CNPY4), found in Bos taurus (Bovine).